Consider the following 368-residue polypeptide: Phospho-N-acetylmuramoyl-pentapeptide-transferase (368 aa).

The next 9 helical transmembrane spans lie at 30-50, 72-92, 98-118, 139-159, 170-190, 201-221, 238-258, 262-284, and 345-365; these read AAAI…IRFL, VPTM…LLWA, HVWL…IDDY, VALG…SVLL, FSVD…TAVS, GLAA…AYLG, AGEI…FLWF, PAEV…VIAL, and KIVI…LMTL.

Belongs to the glycosyltransferase 4 family. MraY subfamily. Requires Mg(2+) as cofactor.

It is found in the cell inner membrane. The catalysed reaction is UDP-N-acetyl-alpha-D-muramoyl-L-alanyl-gamma-D-glutamyl-meso-2,6-diaminopimeloyl-D-alanyl-D-alanine + di-trans,octa-cis-undecaprenyl phosphate = di-trans,octa-cis-undecaprenyl diphospho-N-acetyl-alpha-D-muramoyl-L-alanyl-D-glutamyl-meso-2,6-diaminopimeloyl-D-alanyl-D-alanine + UMP. It functions in the pathway cell wall biogenesis; peptidoglycan biosynthesis. Catalyzes the initial step of the lipid cycle reactions in the biosynthesis of the cell wall peptidoglycan: transfers peptidoglycan precursor phospho-MurNAc-pentapeptide from UDP-MurNAc-pentapeptide onto the lipid carrier undecaprenyl phosphate, yielding undecaprenyl-pyrophosphoryl-MurNAc-pentapeptide, known as lipid I. The polypeptide is Phospho-N-acetylmuramoyl-pentapeptide-transferase (Chlorobaculum parvum (strain DSM 263 / NCIMB 8327) (Chlorobium vibrioforme subsp. thiosulfatophilum)).